The following is a 103-amino-acid chain: Large ribosomal subunit protein bL21 (103 aa).

This sequence belongs to the bacterial ribosomal protein bL21 family. As to quaternary structure, part of the 50S ribosomal subunit. Contacts protein L20.

In terms of biological role, this protein binds to 23S rRNA in the presence of protein L20. The protein is Large ribosomal subunit protein bL21 of Bordetella avium (strain 197N).